Consider the following 147-residue polypeptide: D-aminoacyl-tRNA deacylase (147 aa).

The Gly-cisPro motif, important for rejection of L-amino acids motif lies at 136-137 (GP).

It belongs to the DTD family. Homodimer.

It is found in the cytoplasm. The enzyme catalyses glycyl-tRNA(Ala) + H2O = tRNA(Ala) + glycine + H(+). It catalyses the reaction a D-aminoacyl-tRNA + H2O = a tRNA + a D-alpha-amino acid + H(+). Its function is as follows. An aminoacyl-tRNA editing enzyme that deacylates mischarged D-aminoacyl-tRNAs. Also deacylates mischarged glycyl-tRNA(Ala), protecting cells against glycine mischarging by AlaRS. Acts via tRNA-based rather than protein-based catalysis; rejects L-amino acids rather than detecting D-amino acids in the active site. By recycling D-aminoacyl-tRNA to D-amino acids and free tRNA molecules, this enzyme counteracts the toxicity associated with the formation of D-aminoacyl-tRNA entities in vivo and helps enforce protein L-homochirality. This Streptococcus pyogenes serotype M6 (strain ATCC BAA-946 / MGAS10394) protein is D-aminoacyl-tRNA deacylase.